The following is a 2357-amino-acid chain: Protein transport protein Sec16A (2357 aa).

2 disordered regions span residues 1 to 25 and 57 to 303; these read MQPP…RSVF and FSRQ…STFR. Composition is skewed to low complexity over residues 64 to 76 and 210 to 227; these read STPL…SSPP and QMPG…PSGQ. Positions 285–303 are enriched in polar residues; that stretch reads HLQSGSHLANNSDPESTFR. S296, S314, and S331 each carry phosphoserine. Disordered stretches follow at residues 335 to 359, 508 to 540, 553 to 603, 758 to 828, 924 to 987, 1006 to 1038, and 1059 to 1151; these read NPLA…GSGC, APDA…ARPQ, KPED…TGIF, VQPP…NPPV, LLVQ…SSHQ, VNVY…PNLD, and QELV…APGP. Positions 520 to 536 are enriched in low complexity; the sequence is SVSSSYSSRSHGRLSGS. A phosphoserine mark is found at S559, S569, S587, S589, and S592. At T593 the chain carries Phosphothreonine. Phosphoserine is present on S595. 2 stretches are compositionally biased toward polar residues: residues 766–778 and 803–825; these read SGQQ…SAAP and LQSQ…SLQN. Over residues 1006–1028 the composition is skewed to polar residues; sequence VNVYNPSHSDSLASQQSVASHPR. The interval 1019 to 1890 is required for localization to endoplasmic reticulum exit sites; the sequence is SQQSVASHPR…QQVERQIKEG (872 aa). S1069 carries the phosphoserine modification. A compositionally biased stretch (polar residues) spans 1080–1101; the sequence is ELSNPESLPAQGQAQNSAQSPA. The interval 1101 to 1400 is interaction with MIA3; it reads ASLVLVDAGQ…EAPLPPGSFH (300 aa). The segment at 1102–1405 is required for endoplasmic reticulum localization; it reads SLVLVDAGQQ…PGSFHGDFAY (304 aa). A compositionally biased stretch (low complexity) spans 1118–1131; it reads QSSSVSLVSSGSGQ. Residues 1138-1151 show a composition bias toward pro residues; the sequence is QPWPQPVPALAPGP. Phosphoserine is present on residues S1207, S1229, and S1305. The interval 1215–1248 is disordered; that stretch reads YPEPERPSSRASHSSERPPPRQGYPEGYYSSKSG. Residues 1216–1233 show a composition bias toward basic and acidic residues; that stretch reads PEPERPSSRASHSSERPP. Basic and acidic residues predominate over residues 1307-1322; that stretch reads FGDRPEKRDNNWRYDP. A disordered region spans residues 1307–1378; the sequence is FGDRPEKRDN…SLSSHSHQSQ (72 aa). T1325 is subject to Phosphothreonine. 9 positions are modified to phosphoserine: S1327, S1347, S1350, S1356, S1359, S1362, S1369, S1573, and S1601. Over residues 1333–1354 the composition is skewed to basic and acidic residues; sequence DPHRDPYGEEVDRRSVHSEHSA. Positions 1356-1375 are enriched in low complexity; the sequence is SLHSAHSLASRRSSLSSHSH. The segment at 1434–1890 is central conserved domain (CCD); mediates interaction with RNF183, LRRK2 and SEC13; the sequence is QVSSRPTSPE…QQVERQIKEG (457 aa). T1907 bears the Phosphothreonine mark. S1939, S1964, S2022, and S2042 each carry phosphoserine. Disordered stretches follow at residues 2049 to 2110, 2141 to 2181, and 2226 to 2328; these read KFAN…SWFF, VNLN…PVNM, and NLFV…MPFY. T2054 is modified (phosphothreonine). Phosphoserine occurs at positions 2056, 2073, and 2083. The segment covering 2087–2106 has biased composition (basic and acidic residues); sequence ETKRPGQAAKKETKEPKKGE. The segment at 2106-2357 is required for interaction with SEC23A; the sequence is ESWFFRWLPG…IGQRKHLVLN (252 aa). Phosphoserine occurs at positions 2271 and 2291. 2 stretches are compositionally biased toward low complexity: residues 2289–2302 and 2310–2324; these read ELSR…LSRE and APGD…PSGA.

Belongs to the SEC16 family. SEC16A and SEC16B are each present in multiple copies in a heteromeric complex. Interacts with SEC23A. Interacts with RNF183 and RNF152. Interacts with LRRK2 (via ROC domain). Interacts with SEC13. Interacts with RAB10. Interacts with MIA3. Interacts with GORASP2 in response to ER stress. Ubiquitous. Expressed at higher levels in the pancreas.

The protein localises to the endoplasmic reticulum membrane. It is found in the golgi apparatus membrane. The protein resides in the cytoplasm. Its subcellular location is the perinuclear region. It localises to the cytosol. The protein localises to the microsome membrane. Functionally, acts as a molecular scaffold that plays a key role in the organization of the endoplasmic reticulum exit sites (ERES), also known as transitional endoplasmic reticulum (tER). SAR1A-GTP-dependent assembly of SEC16A on the ER membrane forms an organized scaffold defining an ERES. Required for secretory cargo traffic from the endoplasmic reticulum to the Golgi apparatus. Mediates the recruitment of MIA3/TANGO to ERES. Regulates both conventional (ER/Golgi-dependent) and GORASP2-mediated unconventional (ER/Golgi-independent) trafficking of CFTR to cell membrane. Positively regulates the protein stability of E3 ubiquitin-protein ligases RNF152 and RNF183 and the ER localization of RNF183. Acts as a RAB10 effector in the regulation of insulin-induced SLC2A4/GLUT4 glucose transporter-enriched vesicles delivery to the cell membrane in adipocytes. This Homo sapiens (Human) protein is Protein transport protein Sec16A (SEC16A).